Reading from the N-terminus, the 301-residue chain is MGHYFINLFTYTIIAFIFSAVLCKFLMKKMINYKFGYDLHKKEKIKVPEMGGLAVLFSNALFIPFVNPIFVLPIITAGIIGIVDDIAKLSPKEKLILLFISGLIIGILFYNNSYVNLIEILIIALGIMISSNLTNMLAGFNGLEIGMGVIASISLALVLFLDNYTTGFLSALIFSASYLGLLIFNKYPAKVFPGDVGTLPIGAFLAVLAVVYKEYIPFLVIMMPYVIDASLKYLSAGVMSRDEHKPTTLKEDGKLYYIGGYLSLPRLILKYKPMREPHLVTVLWIIGIFFGIVGILISLIA.

The next 8 membrane-spanning stretches (helical) occupy residues 2-22 (GHYF…SAVL), 62-82 (FIPF…IIGI), 95-115 (LILL…NSYV), 117-137 (LIEI…TNML), 140-160 (FNGL…LVLF), 164-184 (YTTG…LLIF), 191-211 (VFPG…LAVV), and 280-300 (VTVL…ISLI).

The protein belongs to the glycosyltransferase 4 family.

It is found in the cell membrane. The polypeptide is Putative glycosyltransferase MJ1113 (Methanocaldococcus jannaschii (strain ATCC 43067 / DSM 2661 / JAL-1 / JCM 10045 / NBRC 100440) (Methanococcus jannaschii)).